The primary structure comprises 506 residues: Probable cytochrome P450 519E1 (506 aa).

Residues 1–21 traverse the membrane as a helical segment; it reads MGIGLIILYLLIGLLAYDFTK. Cys-453 provides a ligand contact to heme.

The protein belongs to the cytochrome P450 family. Heme is required as a cofactor.

It is found in the membrane. In Dictyostelium discoideum (Social amoeba), this protein is Probable cytochrome P450 519E1 (cyp519E1).